We begin with the raw amino-acid sequence, 440 residues long: MRLSRYFLPILRENPKEAEIVSHRLMLRAGMIRQEAAGIYSWLPLGLRVLQKVAEIVRQEMNRAGAIELLMPTLQLADLWRETGRYEAYGPEMLRIKDRHEREMLYGPTNEDMITAIFRSYVRSYRELPKILYHIQWKFRDEQRPRFGVMRGREFLMKDAYSFDVDEAAARLAYNRMFVSYLRIFARMGLRVIPMRAETGPIGGDQSHEFIILAETGESAVYCDAGVLNLPIPDETIDYDGDLSPIVKQWTSLYAATEDVHDAERFALETTEGQRIETRGIEVGQVFFFGDKYSKPMNANIAGPDGVERPFQGGSYGVGVSRLVGALIEANHDEAGIIWPASVAPFKVGIANLKVGDAATDAACEKLLAALEKAGVDVLYDDSADRPGAKFAKLDLIGLPYQAIVGPKGLAEGKIEIKTRASGERVELSLDEAIERLIAS.

Belongs to the class-II aminoacyl-tRNA synthetase family. ProS type 2 subfamily. As to quaternary structure, homodimer.

It is found in the cytoplasm. The catalysed reaction is tRNA(Pro) + L-proline + ATP = L-prolyl-tRNA(Pro) + AMP + diphosphate. Catalyzes the attachment of proline to tRNA(Pro) in a two-step reaction: proline is first activated by ATP to form Pro-AMP and then transferred to the acceptor end of tRNA(Pro). The protein is Proline--tRNA ligase of Methylocella silvestris (strain DSM 15510 / CIP 108128 / LMG 27833 / NCIMB 13906 / BL2).